Reading from the N-terminus, the 839-residue chain is Molybdenum cofactor sulfurase (839 aa).

Lys-237 carries the post-translational modification N6-(pyridoxal phosphate)lysine. Residue Cys-401 is part of the active site. Polar residues predominate over residues 651 to 662 (DQNYSQKQSPSM). A disordered region spans residues 651-678 (DQNYSQKQSPSMPGSFPQAPSSPDPYPT). The 179-residue stretch at 656 to 834 (QKQSPSMPGS…IMVGDAVTPS (179 aa)) folds into the MOSC domain.

The protein belongs to the class-V pyridoxal-phosphate-dependent aminotransferase family. MOCOS subfamily. Requires pyridoxal 5'-phosphate as cofactor.

The enzyme catalyses Mo-molybdopterin + L-cysteine + AH2 = thio-Mo-molybdopterin + L-alanine + A + H2O. It functions in the pathway cofactor biosynthesis; molybdopterin biosynthesis. Functionally, sulfurates the molybdenum cofactor. Sulfation of molybdenum is essential for xanthine dehydrogenase (XDH) and aldehyde oxidase (ADO) enzymes in which molybdenum cofactor is liganded by 1 oxygen and 1 sulfur atom in active form. This Emericella nidulans (strain FGSC A4 / ATCC 38163 / CBS 112.46 / NRRL 194 / M139) (Aspergillus nidulans) protein is Molybdenum cofactor sulfurase.